The sequence spans 291 residues: ATP synthase gamma chain (291 aa).

Belongs to the ATPase gamma chain family. As to quaternary structure, F-type ATPases have 2 components, CF(1) - the catalytic core - and CF(0) - the membrane proton channel. CF(1) has five subunits: alpha(3), beta(3), gamma(1), delta(1), epsilon(1). CF(0) has three main subunits: a, b and c.

It localises to the cell inner membrane. In terms of biological role, produces ATP from ADP in the presence of a proton gradient across the membrane. The gamma chain is believed to be important in regulating ATPase activity and the flow of protons through the CF(0) complex. This is ATP synthase gamma chain from Pelagibacter ubique (strain HTCC1062).